We begin with the raw amino-acid sequence, 161 residues long: Blue copper protein 1a (161 aa).

The N-terminal stretch at 1 to 23 (MASSRVVLILSISMVLLSSVAIA) is a signal peptide. The 101-residue stretch at 24–124 (TDHIVGDDKG…QMKLVITVLA (101 aa)) folds into the Phytocyanin domain. His-64 contacts Cu cation. N-linked (GlcNAc...) asparagine glycosylation occurs at Asn-70. Cys-77 and Cys-111 form a disulfide bridge. Cu cation contacts are provided by Cys-105, His-110, and Met-116. The helical transmembrane segment at 141 to 161 (VVSSLFGVVMAIMVAIAVIFA) threads the bilayer.

The protein localises to the membrane. The sequence is that of Blue copper protein 1a from Medicago truncatula (Barrel medic).